A 134-amino-acid chain; its full sequence is Large ribosomal subunit protein eL32 (134 aa).

The protein belongs to the eukaryotic ribosomal protein eL32 family.

The sequence is that of Large ribosomal subunit protein eL32 (RpL32) from Spodoptera frugiperda (Fall armyworm).